The chain runs to 37 residues: Omega-agatoxin-Aa3d (37 aa).

The protein belongs to the neurotoxin 04 (omega-agtx) family. 03 (type II/III omega-agtx) subfamily. Post-translationally, disulfide bonds are present. As to expression, expressed by the venom gland.

It localises to the secreted. Functionally, omega-agatoxins are antagonists of voltage-gated calcium channels. This toxin blocks calcium channels in insect central neurons but not at peripheral neuromuscular junctions. In vertebrates, it is broadly active against all high-threshold Cav1/CACNA1 channels and Cav2.2/CACNA1B channels. The polypeptide is Omega-agatoxin-Aa3d (Agelenopsis aperta (North American funnel-web spider)).